The chain runs to 30 residues: Photosystem I reaction center subunit XII (30 aa).

Residues 7-29 (VYIALMAALLASVLAIRLGATLY) form a helical membrane-spanning segment.

It belongs to the PsaM family.

The protein localises to the plastid. The protein resides in the chloroplast thylakoid membrane. This chain is Photosystem I reaction center subunit XII, found in Thalassiosira pseudonana (Marine diatom).